The chain runs to 202 residues: Small heat shock protein hspG5 (202 aa).

The sHSP domain maps to 31 to 202 (KTIIDIIPPM…YSNTIKININ (172 aa)). The segment at 96 to 138 (TSSTTLDSKEDEASIEEFEDDIKPKSKSTVTTTATKENKEDEN) is disordered.

This sequence belongs to the small heat shock protein (HSP20) family.

The polypeptide is Small heat shock protein hspG5 (hspG5) (Dictyostelium discoideum (Social amoeba)).